The sequence spans 62 residues: Short neurotoxin C (62 aa).

Polar residues predominate over residues 1–16 (RRCFNQQSSQPQTNKS). Positions 1 to 22 (RRCFNQQSSQPQTNKSCPPGEN) are disordered. 4 cysteine pairs are disulfide-bonded: Cys-3/Cys-24, Cys-17/Cys-41, Cys-43/Cys-54, and Cys-55/Cys-60.

It belongs to the three-finger toxin family. Short-chain subfamily. Type I alpha-neurotoxin sub-subfamily. In terms of tissue distribution, expressed by the venom gland.

It is found in the secreted. Binds to muscle nicotinic acetylcholine receptor (nAChR) and inhibit acetylcholine from binding to the receptor, thereby impairing neuromuscular transmission. This chain is Short neurotoxin C, found in Laticauda laticaudata (Blue-ringed sea krait).